We begin with the raw amino-acid sequence, 213 residues long: Isomeliandiol synthase MOI2 (213 aa).

Helical transmembrane passes span 18–38 (AALH…SWFI), 52–72 (VLCW…YYVF), 109–129 (IESM…YALA), 137–157 (ILQF…FLSA), and 171–191 (YWAY…LIAI). Residues 48–190 (MDRVVLCWWA…IWVIVPALIA (143 aa)) enclose the EXPERA domain.

It belongs to the EBP family. In terms of tissue distribution, mainly expressed in petioles.

It is found in the membrane. It catalyses the reaction 7,8-epoxymelianol = isomeliandiol. It participates in secondary metabolite biosynthesis; terpenoid biosynthesis. Its function is as follows. Isomerase involved in the biosynthesis of limonoids triterpene natural products such as azadirachtin, an antifeedant widely used as bioinsecticide, and possessing many medicinal applications including anti-tumoral, anti-malarial, anti-rheumatic, antibacterial, anti-inflammatory, anti-pyretic and diuretic effects. Catalyzes the conversion of 7,8-epoxymelianol to isomeliandiol via skeletal rearrangements. The chain is Isomeliandiol synthase MOI2 from Melia azedarach (Chinaberry tree).